The primary structure comprises 393 residues: Bifunctional enzyme IspD/IspF (393 aa).

The tract at residues 1–234 (MTTSQRTAAI…ARLAASLGDI (234 aa)) is 2-C-methyl-D-erythritol 4-phosphate cytidylyltransferase. Residues 235-393 (RTGTGYDVHA…SATIRLPWGA (159 aa)) are 2-C-methyl-D-erythritol 2,4-cyclodiphosphate synthase. The a divalent metal cation site is built by aspartate 241 and histidine 243. 4-CDP-2-C-methyl-D-erythritol 2-phosphate contacts are provided by residues 241-243 (DVH) and 267-268 (HS). Histidine 275 provides a ligand contact to a divalent metal cation. 4-CDP-2-C-methyl-D-erythritol 2-phosphate-binding positions include 289 to 291 (DIG), 365 to 368 (TTSE), phenylalanine 372, and arginine 375.

This sequence in the N-terminal section; belongs to the IspD/TarI cytidylyltransferase family. IspD subfamily. The protein in the C-terminal section; belongs to the IspF family. It depends on a divalent metal cation as a cofactor.

It catalyses the reaction 2-C-methyl-D-erythritol 4-phosphate + CTP + H(+) = 4-CDP-2-C-methyl-D-erythritol + diphosphate. The catalysed reaction is 4-CDP-2-C-methyl-D-erythritol 2-phosphate = 2-C-methyl-D-erythritol 2,4-cyclic diphosphate + CMP. It functions in the pathway isoprenoid biosynthesis; isopentenyl diphosphate biosynthesis via DXP pathway; isopentenyl diphosphate from 1-deoxy-D-xylulose 5-phosphate: step 2/6. Its pathway is isoprenoid biosynthesis; isopentenyl diphosphate biosynthesis via DXP pathway; isopentenyl diphosphate from 1-deoxy-D-xylulose 5-phosphate: step 4/6. Bifunctional enzyme that catalyzes the formation of 4-diphosphocytidyl-2-C-methyl-D-erythritol from CTP and 2-C-methyl-D-erythritol 4-phosphate (MEP) (IspD), and catalyzes the conversion of 4-diphosphocytidyl-2-C-methyl-D-erythritol 2-phosphate (CDP-ME2P) to 2-C-methyl-D-erythritol 2,4-cyclodiphosphate (ME-CPP) with a corresponding release of cytidine 5-monophosphate (CMP) (IspF). The sequence is that of Bifunctional enzyme IspD/IspF from Bradyrhizobium sp. (strain ORS 278).